A 436-amino-acid polypeptide reads, in one-letter code: Methylenetetrahydrofolate--tRNA-(uracil-5-)-methyltransferase TrmFO (436 aa).

Residue 10–15 (GAGLAG) coordinates FAD.

The protein belongs to the MnmG family. TrmFO subfamily. Requires FAD as cofactor.

It localises to the cytoplasm. It carries out the reaction uridine(54) in tRNA + (6R)-5,10-methylene-5,6,7,8-tetrahydrofolate + NADH + H(+) = 5-methyluridine(54) in tRNA + (6S)-5,6,7,8-tetrahydrofolate + NAD(+). It catalyses the reaction uridine(54) in tRNA + (6R)-5,10-methylene-5,6,7,8-tetrahydrofolate + NADPH + H(+) = 5-methyluridine(54) in tRNA + (6S)-5,6,7,8-tetrahydrofolate + NADP(+). Catalyzes the folate-dependent formation of 5-methyl-uridine at position 54 (M-5-U54) in all tRNAs. This Staphylococcus carnosus (strain TM300) protein is Methylenetetrahydrofolate--tRNA-(uracil-5-)-methyltransferase TrmFO.